The primary structure comprises 279 residues: Dehydrogenase/reductase SDR family member 4 (279 aa).

An NADP(+)-binding site is contributed by 37–61 (LVTASTDGIGLAIARRLAQDGAHVV). Position 93 is an N6-acetyllysine; alternate (Lys-93). Lys-93 carries the post-translational modification N6-succinyllysine; alternate. Residue Ser-170 coordinates substrate. The active-site Proton acceptor is Tyr-183. Lys-187 provides a ligand contact to NADP(+). Lys-217 is modified (N6-acetyllysine; alternate). Position 217 is an N6-succinyllysine; alternate (Lys-217). The residue at position 221 (Ser-221) is a Phosphoserine. An N6-succinyllysine mark is found at Lys-228 and Lys-235. The Peroxisomal targeting signal signature appears at 277–279 (SRL).

This sequence belongs to the short-chain dehydrogenases/reductases (SDR) family. As to quaternary structure, homotetramer. In terms of tissue distribution, detected in heart, kidney, liver and small intestine. Detected at lower levels in brain, lung, stomach and spleen.

The protein resides in the peroxisome. It catalyses the reaction a secondary alcohol + NADP(+) = a ketone + NADPH + H(+). The catalysed reaction is 3alpha-hydroxy-5beta-pregnan-20-one + NADP(+) = 5beta-pregnan-3,20-dione + NADPH + H(+). The enzyme catalyses 5beta-dihydrotestosterone + NADPH + H(+) = 5beta-androstane-3alpha,17beta-diol + NADP(+). It carries out the reaction all-trans-retinol + NADP(+) = all-trans-retinal + NADPH + H(+). It catalyses the reaction isatin + NADPH + H(+) = 3-hydroxyindolin-2-one + NADP(+). With respect to regulation, inhibited by kaempferol, quercetin, genistein and myristic acid. NADPH-dependent oxidoreductase which catalyzes the reduction of a variety of compounds bearing carbonyl groups including ketosteroids, alpha-dicarbonyl compounds, aldehydes, aromatic ketones and quinones. Reduces all-trans-retinal and 9-cis retinal. Reduces 3-ketosteroids and benzil into 3alpha-hydroxysteroids and S-benzoin, respectively, in contrast to the stereoselectivity of primates DHRS4s which produce 3beta-hydroxysteroids and R-benzoin. In the reverse reaction, catalyzes the NADP-dependent oxidation of 3alpha-hydroxysteroids and alcohol, but with much lower efficiency. Involved in the metabolism of 3alpha-hydroxysteroids, retinoid, isatin and xenobiotic carbonyl compounds. The chain is Dehydrogenase/reductase SDR family member 4 (DHRS4) from Sus scrofa (Pig).